The primary structure comprises 329 residues: Cytochrome f (329 aa).

Positions 1–44 are cleaved as a signal peptide; that stretch reads MKRNIIFLVIHQFENLTMKKKQNIFFIFLLTVFFNFTVNSNVSA. Heme is bound by residues tyrosine 45, cysteine 65, cysteine 68, and histidine 69. Residues 295 to 315 traverse the membrane as a helical segment; it reads VQGLIIFLITIFITQLFLVLK.

This sequence belongs to the cytochrome f family. The 4 large subunits of the cytochrome b6-f complex are cytochrome b6, subunit IV (17 kDa polypeptide, petD), cytochrome f and the Rieske protein, while the 4 small subunits are PetG, PetL, PetM and PetN. The complex functions as a dimer. Heme is required as a cofactor.

It is found in the plastid. The protein resides in the chloroplast thylakoid membrane. Functionally, component of the cytochrome b6-f complex, which mediates electron transfer between photosystem II (PSII) and photosystem I (PSI), cyclic electron flow around PSI, and state transitions. The sequence is that of Cytochrome f from Tupiella akineta (Green alga).